The sequence spans 245 residues: 1-(5-phosphoribosyl)-5-[(5-phosphoribosylamino)methylideneamino] imidazole-4-carboxamide isomerase (245 aa).

D7 acts as the Proton acceptor in catalysis. D129 functions as the Proton donor in the catalytic mechanism.

The protein belongs to the HisA/HisF family.

The protein resides in the cytoplasm. The catalysed reaction is 1-(5-phospho-beta-D-ribosyl)-5-[(5-phospho-beta-D-ribosylamino)methylideneamino]imidazole-4-carboxamide = 5-[(5-phospho-1-deoxy-D-ribulos-1-ylimino)methylamino]-1-(5-phospho-beta-D-ribosyl)imidazole-4-carboxamide. Its pathway is amino-acid biosynthesis; L-histidine biosynthesis; L-histidine from 5-phospho-alpha-D-ribose 1-diphosphate: step 4/9. The chain is 1-(5-phosphoribosyl)-5-[(5-phosphoribosylamino)methylideneamino] imidazole-4-carboxamide isomerase from Erwinia tasmaniensis (strain DSM 17950 / CFBP 7177 / CIP 109463 / NCPPB 4357 / Et1/99).